Reading from the N-terminus, the 224-residue chain is MLIEIPNVFSKEEVNQLREELDARTWIDGNQTSGVMASTRKRNQQLDKDDPVALQIGELIMARLLAHPLFVSAALPLQFYPPLFNRYQGGETFGYHIDNAIRSTSEGMVRTDLSATLFLSEPDTYQGGELVIQDTYGQQSIKLAAGSLVLYPSTSLHQVTPVTSGERTAAFMWLQSMVRDEGQRRLLFQLDQSIQALTAQAASEQELFNLTGVYHNLLRRWSEL.

The region spanning 78–176 (QFYPPLFNRY…RTAAFMWLQS (99 aa)) is the Fe2OG dioxygenase domain. Residues histidine 96, aspartate 98, and histidine 157 each contribute to the Fe cation site. 2-oxoglutarate is bound at residue arginine 167.

It depends on Fe(2+) as a cofactor. Requires L-ascorbate as cofactor.

This chain is PKHD-type hydroxylase Shewmr4_3244, found in Shewanella sp. (strain MR-4).